The sequence spans 901 residues: Protein translocase subunit SecA (901 aa).

Residues Gln-87, 105–109 (GEGKT), and Asp-512 contribute to the ATP site. Positions 853-901 (QMQQLSHQTDENEAAEAIAAQTGDRKVGRNDPCPCGSGKKYKSCHGRLS) are disordered. Positions 885, 887, 896, and 897 each coordinate Zn(2+). A compositionally biased stretch (basic residues) spans 891–901 (KKYKSCHGRLS).

It belongs to the SecA family. As to quaternary structure, monomer and homodimer. Part of the essential Sec protein translocation apparatus which comprises SecA, SecYEG and auxiliary proteins SecDF-YajC and YidC. Requires Zn(2+) as cofactor.

The protein localises to the cell inner membrane. It localises to the cytoplasm. It carries out the reaction ATP + H2O + cellular proteinSide 1 = ADP + phosphate + cellular proteinSide 2.. Its function is as follows. Part of the Sec protein translocase complex. Interacts with the SecYEG preprotein conducting channel. Has a central role in coupling the hydrolysis of ATP to the transfer of proteins into and across the cell membrane, serving both as a receptor for the preprotein-SecB complex and as an ATP-driven molecular motor driving the stepwise translocation of polypeptide chains across the membrane. This chain is Protein translocase subunit SecA, found in Enterobacter sp. (strain 638).